Reading from the N-terminus, the 304-residue chain is D-alanine--D-alanine ligase (304 aa).

The ATP-grasp domain maps to 103 to 299 (KLIWQALGLP…FADLCIEILK (197 aa)). 129–184 (EEKLGLPMFVKPAAEGSSVGVVKVKGKGRLKSVYEELKHLQGEIIAERFIGGGEYS) contacts ATP. The Mg(2+) site is built by D253, E266, and N268.

The protein belongs to the D-alanine--D-alanine ligase family. The cofactor is Mg(2+). It depends on Mn(2+) as a cofactor.

It localises to the cytoplasm. It carries out the reaction 2 D-alanine + ATP = D-alanyl-D-alanine + ADP + phosphate + H(+). It participates in cell wall biogenesis; peptidoglycan biosynthesis. Its function is as follows. Cell wall formation. This is D-alanine--D-alanine ligase from Neisseria meningitidis serogroup C / serotype 2a (strain ATCC 700532 / DSM 15464 / FAM18).